We begin with the raw amino-acid sequence, 448 residues long: MNTSFDPVAANSNSANVTPGYMSGFGNSFETEALPGALPIGRNSPQRCAYGLYAEQLSGSPFTAPRGANERSWLYRIRPSVRHSGHFVKIDAKLWRTAPCLEHDMPLAQLRWDPTPIPEDELTFVQSVRTMTTAGDAHTQTGMAAHIYLITRSMVDQHFYNADGEMLFVPQGGSLRFVTEFGVIDTEPGEIAVIPRGVKFRVEIPSGPARGYLCENYGGAFTLPERGPIGANCLANSRDFLTPVAAYEDDDKPTELFVKWGGALWSTALPHSPIDVVAWHGNYAPYKYDLRTFSPIGAIGFDHPDPSIFTVLTSPSEIAGTANIDFVIFPERWVVAENTFRPPWYHMNVMSEFMGLIYGVYDAKPQGFVPGGISLHNCMLPHGPDREAFDHASNTELKPVKLTGTLAFMFETRFPQRVTEYAATSDALQDDYADCWQGLERRFDPTRP.

His-303 serves as the catalytic Proton acceptor. His-346 and Glu-352 together coordinate Fe cation. Positions 361 and 382 each coordinate homogentisate. Residue His-382 coordinates Fe cation.

The protein belongs to the homogentisate dioxygenase family. Hexamer; dimer of trimers. Requires Fe cation as cofactor.

The catalysed reaction is homogentisate + O2 = 4-maleylacetoacetate + H(+). It participates in amino-acid degradation; L-phenylalanine degradation; acetoacetate and fumarate from L-phenylalanine: step 4/6. Its function is as follows. Involved in the catabolism of homogentisate (2,5-dihydroxyphenylacetate or 2,5-OH-PhAc), a central intermediate in the degradation of phenylalanine and tyrosine. Catalyzes the oxidative ring cleavage of the aromatic ring of homogentisate to yield maleylacetoacetate. The protein is Homogentisate 1,2-dioxygenase of Nitrobacter hamburgensis (strain DSM 10229 / NCIMB 13809 / X14).